The sequence spans 202 residues: Dephospho-CoA kinase (202 aa).

The region spanning 5 to 202 is the DPCK domain; sequence IVGLTGGIAS…DADYRARANP (198 aa). 13–18 lines the ATP pocket; it reads ASGKSA.

This sequence belongs to the CoaE family.

The protein resides in the cytoplasm. The enzyme catalyses 3'-dephospho-CoA + ATP = ADP + CoA + H(+). The protein operates within cofactor biosynthesis; coenzyme A biosynthesis; CoA from (R)-pantothenate: step 5/5. Functionally, catalyzes the phosphorylation of the 3'-hydroxyl group of dephosphocoenzyme A to form coenzyme A. This is Dephospho-CoA kinase from Xanthomonas axonopodis pv. citri (strain 306).